The primary structure comprises 409 residues: Na(+)-translocating NADH-quinone reductase subunit F (409 aa).

Residues 5-25 form a helical membrane-spanning segment; that stretch reads FIFGIIAFTALVLVLAVIILF. The region spanning 34–128 is the 2Fe-2S ferredoxin-type domain; the sequence is GDITISINND…SMDVELPEEI (95 aa). 4 residues coordinate [2Fe-2S] cluster: Cys-71, Cys-77, Cys-80, and Cys-112. The FAD-binding FR-type domain occupies 131–271; sequence VKKWECTVIS…SGPFGEFFAK (141 aa).

The protein belongs to the NqrF family. As to quaternary structure, composed of six subunits; NqrA, NqrB, NqrC, NqrD, NqrE and NqrF. The cofactor is [2Fe-2S] cluster. FAD is required as a cofactor.

The protein resides in the cell inner membrane. The enzyme catalyses a ubiquinone + n Na(+)(in) + NADH + H(+) = a ubiquinol + n Na(+)(out) + NAD(+). NQR complex catalyzes the reduction of ubiquinone-1 to ubiquinol by two successive reactions, coupled with the transport of Na(+) ions from the cytoplasm to the periplasm. The first step is catalyzed by NqrF, which accepts electrons from NADH and reduces ubiquinone-1 to ubisemiquinone by a one-electron transfer pathway. In Actinobacillus pleuropneumoniae serotype 5b (strain L20), this protein is Na(+)-translocating NADH-quinone reductase subunit F.